A 97-amino-acid chain; its full sequence is YcgL domain-containing protein PputGB1_4120 (97 aa).

The YcgL domain maps to 3–87; that stretch reads RICSIYKSPR…AEDEYIEHLP (85 aa).

The sequence is that of YcgL domain-containing protein PputGB1_4120 from Pseudomonas putida (strain GB-1).